The sequence spans 100 residues: Protamine-2 (100 aa).

Residues 1–45 form a disordered region; sequence MVRYHVRSPSERPHREYRQLVNGQEQGRHGQEEQGMSAEGVEGYG. S8, S10, and S37 each carry phosphoserine. Over residues 8–18 the composition is skewed to basic and acidic residues; it reads SPSERPHREYR.

Belongs to the protamine P2 family. Interacts with TDRP. In terms of processing, proteolytic processing into mature chains is required for histone eviction during spermatogenesis. Transition proteins (TNP1 and TNP2) are required for processing. Testis.

The protein localises to the nucleus. It localises to the chromosome. Its function is as follows. Protamines substitute for histones in the chromatin of sperm during the haploid phase of spermatogenesis. They compact sperm DNA into a highly condensed, stable and inactive complex. In Alouatta seniculus (Red howler monkey), this protein is Protamine-2 (PRM2).